The primary structure comprises 212 residues: Deoxyribose-phosphate aldolase (212 aa).

The Proton donor/acceptor role is filled by Asp-89. The active-site Schiff-base intermediate with acetaldehyde is Lys-151. The Proton donor/acceptor role is filled by Lys-180.

This sequence belongs to the DeoC/FbaB aldolase family. DeoC type 1 subfamily.

The protein resides in the cytoplasm. It catalyses the reaction 2-deoxy-D-ribose 5-phosphate = D-glyceraldehyde 3-phosphate + acetaldehyde. It participates in carbohydrate degradation; 2-deoxy-D-ribose 1-phosphate degradation; D-glyceraldehyde 3-phosphate and acetaldehyde from 2-deoxy-alpha-D-ribose 1-phosphate: step 2/2. In terms of biological role, catalyzes a reversible aldol reaction between acetaldehyde and D-glyceraldehyde 3-phosphate to generate 2-deoxy-D-ribose 5-phosphate. This chain is Deoxyribose-phosphate aldolase, found in Clostridium botulinum (strain Kyoto / Type A2).